The sequence spans 377 residues: MAENLLPRGDDLAQQENNGFGPLFKRRGRTAAITSAIIGVSSGAMLFLAVKEEEKKTHFLVFTAALLTLSFAFGELLRRLSLVSEEIQHKHTRHQGKWKSVFKTTFTFDHGGCISLTAMFSALILCYQLYEQYEVFSRSDFAILFSVNCLVVPQLLFLVGLRQLSPVETSDLNEKENKNVADGLAWSYYFGYLKLVLPHLKDQIAKSEQFRYKIKKKKLFILLPKTCFTHADIVDADPRVKWAGNLPELKISRGGIKDRIYKHAVHKIEMPRPDGTMDEYHFILEYATSLMTLYDMSQHADAPLSRKERDHQVVLFIRKLREILDKSEECRGSYELVPISGNDPNEIANVLVGMHNAANIEVLAGNHDQANGVIRPE.

4 consecutive transmembrane segments (helical) span residues 30-50 (TAAI…FLAV), 57-77 (THFL…GELL), 106-126 (FTFD…LILC), and 141-161 (FAIL…LVGL).

It belongs to the STING family.

It is found in the membrane. Its function is as follows. Facilitator of innate immune signaling that acts as a sensor of second messenger signals produced by cyclic GMP-AMP synthase-like receptors (cGLRs) and promotes the production of type I interferon. Innate immune response is triggered in response to nucleotides from viruses and bacteria delivered to the cytoplasm. Acts by binding cyclic dinucleotides: recognizes and binds a large variety of 2'-3'- and 3'-3' linked cyclic dinucleotides (2'-3'-cGAMP, 3'-3'-cGAMP, 2',3'-cUAMP, 3',3'-cUAMP and/or 3',3'-c-di-GMP) second messengers produced by cGLRs in response to nucleotides in the cytosol, such as double-stranded RNA (dsRNA). Upon binding to cyclic dinucleotides, oligomerizes and promotes the recruitment and subsequent activation of the transcription factor IRF3 to induce expression of type I interferon. This is Stimulator of interferon genes protein 7 from Stylophora pistillata (Smooth cauliflower coral).